The sequence spans 932 residues: Protocadherin gamma-A7 (932 aa).

The N-terminal stretch at 1–28 is a signal peptide; it reads MAAQPRGGDYRGFFLLSILLGTPWEAWA. Cadherin domains are found at residues 29 to 133, 134 to 242, 243 to 347, 348 to 452, 453 to 562, and 570 to 682; these read GRIL…VPRF, LTEE…TPVF, SLPQ…APEV, TMTS…PPTF, PHSS…PPEI, and DGST…EPSD. At 29 to 692 the chain is on the extracellular side; sequence GRILYSVSEE…GPYNYDLTLY (664 aa). Residues Asn-419 and Asn-545 are each glycosylated (N-linked (GlcNAc...) asparagine). A helical transmembrane segment spans residues 693-713; sequence LVVAVATVSCVFLAFVLVLLA. The Cytoplasmic portion of the chain corresponds to 714–932; sequence LRLRRWHKSR…KKKSGKKEKK (219 aa). Disordered stretches follow at residues 805 to 841 and 902 to 932; these read PSIQ…WPNN and ATLT…KEKK. Residues 922 to 932 show a composition bias toward basic residues; sequence NKKKSGKKEKK.

It localises to the cell membrane. In terms of biological role, potential calcium-dependent cell-adhesion protein. May be involved in the establishment and maintenance of specific neuronal connections in the brain. The chain is Protocadherin gamma-A7 (PCDHGA7) from Homo sapiens (Human).